A 633-amino-acid chain; its full sequence is 1-deoxy-D-xylulose-5-phosphate synthase (633 aa).

Residues 1 to 12 (MSEPTANLQPAS) show a composition bias toward polar residues. The segment at 1-21 (MSEPTANLQPASRTPLLDRVN) is disordered. Residues histidine 86 and 127–129 (GHA) each bind thiamine diphosphate. Aspartate 158 contacts Mg(2+). Residues 159-160 (GS), asparagine 187, and glutamate 377 contribute to the thiamine diphosphate site. A Mg(2+)-binding site is contributed by asparagine 187.

This sequence belongs to the transketolase family. DXPS subfamily. Homodimer. It depends on Mg(2+) as a cofactor. Requires thiamine diphosphate as cofactor.

The enzyme catalyses D-glyceraldehyde 3-phosphate + pyruvate + H(+) = 1-deoxy-D-xylulose 5-phosphate + CO2. Its pathway is metabolic intermediate biosynthesis; 1-deoxy-D-xylulose 5-phosphate biosynthesis; 1-deoxy-D-xylulose 5-phosphate from D-glyceraldehyde 3-phosphate and pyruvate: step 1/1. Its function is as follows. Catalyzes the acyloin condensation reaction between C atoms 2 and 3 of pyruvate and glyceraldehyde 3-phosphate to yield 1-deoxy-D-xylulose-5-phosphate (DXP). In Deinococcus geothermalis (strain DSM 11300 / CIP 105573 / AG-3a), this protein is 1-deoxy-D-xylulose-5-phosphate synthase.